We begin with the raw amino-acid sequence, 396 residues long: B2 bradykinin receptor (396 aa).

The Extracellular portion of the chain corresponds to 1–65 (MDTRSSLCPK…EWWSWLNAIQ (65 aa)). N-linked (GlcNAc...) asparagine glycans are attached at residues asparagine 33 and asparagine 44. Residues 66–89 (APFLWVLFLLAALENIFVLSVFCL) form a helical membrane-spanning segment. At 90-98 (HKTNCTVAE) the chain is on the cytoplasmic side. The helical transmembrane segment at 99 to 123 (IYLGNLAAADLILACGLPFWAITIA) threads the bilayer. The Extracellular portion of the chain corresponds to 124–136 (NNFDWLFGEVLCR). Cysteine 135 and cysteine 216 are disulfide-bonded. The helical transmembrane segment at 137-158 (VVNTMIYMNLYSSICFLMLVSI) threads the bilayer. Residues 159-180 (DRYLALVKTMSMGRMRGVRWAK) lie on the Cytoplasmic side of the membrane. The residue at position 161 (tyrosine 161) is a Phosphotyrosine. The chain crosses the membrane as a helical span at residues 181-203 (LYSLVIWSCTLLLSSPMLVFRTM). Residues 204 to 226 (KDYREEGHNVTACVIVYPSRSWE) lie on the Extracellular side of the membrane. Asparagine 212 carries an N-linked (GlcNAc...) asparagine glycan. Residues 227 to 253 (VFTNMLLNLVGFLLPLSIITFCTVRIM) traverse the membrane as a helical segment. Topologically, residues 254–272 (QVLRNNEMKKFKEVQTEKK) are cytoplasmic. A helical membrane pass occupies residues 273-297 (ATVLVLAVLGLFVLCWFPFQISTFL). The Extracellular segment spans residues 298 to 316 (DTLLRLGVLSGCWNERAVD). A helical membrane pass occupies residues 317–340 (IVTQISSYVAYSNSCLNPLVYVIV). Over 341–396 (GKRFRKKSREVYQAICRKGGCMGESVQMENSMGTLRTSISVDRQIHKLQDWAGNKQ) the chain is Cytoplasmic. At tyrosine 352 the chain carries Phosphotyrosine. Cysteine 356 carries S-palmitoyl cysteine lipidation. Phosphoserine is present on residues serine 365 and serine 371. Residue threonine 374 is modified to Phosphothreonine. 2 positions are modified to phosphoserine; by GRK6: serine 378 and serine 380.

It belongs to the G-protein coupled receptor 1 family. Bradykinin receptor subfamily. BDKRB2 sub-subfamily. As to quaternary structure, forms a complex with PECAM1 and GNAQ. Interacts with PECAM1. In terms of processing, diphosphorylation at Ser-365 and Ser-371, at Ser-378 and Ser-380, and at Thr-374 and Ser-380 seem to be correlated pairwise. Post-translationally, palmitoylation at Cys-356 and phosphorylation at Tyr-352 seem to be mutually exclusive. As to expression, uterus, vas deferens, kidney, ileum, heart, testis, lung and brain.

The protein resides in the cell membrane. Receptor for bradykinin. It is associated with G proteins that activate a phosphatidylinositol-calcium second messenger system. This chain is B2 bradykinin receptor (Bdkrb2), found in Rattus norvegicus (Rat).